Here is a 249-residue protein sequence, read N- to C-terminus: Uridylate kinase (249 aa).

15-18 (KLSG) contributes to the ATP binding site. Residues 23–28 (GDEGFG) form an involved in allosteric activation by GTP region. Glycine 57 serves as a coordination point for UMP. 2 residues coordinate ATP: glycine 58 and arginine 62. UMP-binding positions include aspartate 77 and 138–145 (TGNPFFTT). Threonine 165, tyrosine 171, and aspartate 174 together coordinate ATP.

The protein belongs to the UMP kinase family. As to quaternary structure, homohexamer.

It localises to the cytoplasm. The enzyme catalyses UMP + ATP = UDP + ADP. Its pathway is pyrimidine metabolism; CTP biosynthesis via de novo pathway; UDP from UMP (UMPK route): step 1/1. With respect to regulation, allosterically activated by GTP. Inhibited by UTP. Its function is as follows. Catalyzes the reversible phosphorylation of UMP to UDP. This chain is Uridylate kinase, found in Pseudoalteromonas translucida (strain TAC 125).